The sequence spans 231 residues: Enolase-phosphatase E1 (231 aa).

Mg(2+) contacts are provided by D11 and E13. Residues 125–126 (SS) and K162 contribute to the substrate site. D188 lines the Mg(2+) pocket.

This sequence belongs to the HAD-like hydrolase superfamily. MasA/MtnC family. As to quaternary structure, monomer. Mg(2+) is required as a cofactor.

It is found in the cytoplasm. Its subcellular location is the nucleus. It catalyses the reaction 5-methylsulfanyl-2,3-dioxopentyl phosphate + H2O = 1,2-dihydroxy-5-(methylsulfanyl)pent-1-en-3-one + phosphate. The protein operates within amino-acid biosynthesis; L-methionine biosynthesis via salvage pathway; L-methionine from S-methyl-5-thio-alpha-D-ribose 1-phosphate: step 3/6. It functions in the pathway amino-acid biosynthesis; L-methionine biosynthesis via salvage pathway; L-methionine from S-methyl-5-thio-alpha-D-ribose 1-phosphate: step 4/6. Bifunctional enzyme that catalyzes the enolization of 2,3-diketo-5-methylthiopentyl-1-phosphate (DK-MTP-1-P) into the intermediate 2-hydroxy-3-keto-5-methylthiopentenyl-1-phosphate (HK-MTPenyl-1-P), which is then dephosphorylated to form the acireductone 1,2-dihydroxy-3-keto-5-methylthiopentene (DHK-MTPene). This chain is Enolase-phosphatase E1, found in Pyricularia oryzae (strain 70-15 / ATCC MYA-4617 / FGSC 8958) (Rice blast fungus).